We begin with the raw amino-acid sequence, 632 residues long: 1-deoxy-D-xylulose-5-phosphate synthase (632 aa).

Thiamine diphosphate is bound by residues histidine 79 and 120–122 (GHA). A Mg(2+)-binding site is contributed by aspartate 152. Residues 153–154 (GA), asparagine 181, phenylalanine 293, and glutamate 377 each bind thiamine diphosphate. Residue asparagine 181 participates in Mg(2+) binding.

This sequence belongs to the transketolase family. DXPS subfamily. Homodimer. Requires Mg(2+) as cofactor. Thiamine diphosphate serves as cofactor.

It catalyses the reaction D-glyceraldehyde 3-phosphate + pyruvate + H(+) = 1-deoxy-D-xylulose 5-phosphate + CO2. It functions in the pathway metabolic intermediate biosynthesis; 1-deoxy-D-xylulose 5-phosphate biosynthesis; 1-deoxy-D-xylulose 5-phosphate from D-glyceraldehyde 3-phosphate and pyruvate: step 1/1. In terms of biological role, catalyzes the acyloin condensation reaction between C atoms 2 and 3 of pyruvate and glyceraldehyde 3-phosphate to yield 1-deoxy-D-xylulose-5-phosphate (DXP). This chain is 1-deoxy-D-xylulose-5-phosphate synthase, found in Parabacteroides distasonis (strain ATCC 8503 / DSM 20701 / CIP 104284 / JCM 5825 / NCTC 11152).